We begin with the raw amino-acid sequence, 534 residues long: 2,3-bisphosphoglycerate-independent phosphoglycerate mutase (534 aa).

Residues Asp15 and Ser65 each coordinate Mn(2+). Residue Ser65 is the Phosphoserine intermediate of the active site. Substrate-binding positions include His126, 156–157 (RD), Arg188, Arg194, 261–264 (RPDR), and Lys334. Residues Asp401, His405, Asp442, His443, and His460 each coordinate Mn(2+).

Belongs to the BPG-independent phosphoglycerate mutase family. Mn(2+) serves as cofactor.

The protein resides in the plastid. The protein localises to the chloroplast. It catalyses the reaction (2R)-2-phosphoglycerate = (2R)-3-phosphoglycerate. It functions in the pathway carbohydrate degradation; glycolysis; pyruvate from D-glyceraldehyde 3-phosphate: step 3/5. Its function is as follows. Catalyzes the interconversion of 2-phosphoglycerate and 3-phosphoglycerate. The sequence is that of 2,3-bisphosphoglycerate-independent phosphoglycerate mutase from Pyropia yezoensis (Susabi-nori).